A 299-amino-acid chain; its full sequence is Homoserine kinase (299 aa).

85–95 (PMSRGLGSSAT) lines the ATP pocket.

This sequence belongs to the GHMP kinase family. Homoserine kinase subfamily.

It is found in the cytoplasm. The enzyme catalyses L-homoserine + ATP = O-phospho-L-homoserine + ADP + H(+). It participates in amino-acid biosynthesis; L-threonine biosynthesis; L-threonine from L-aspartate: step 4/5. Functionally, catalyzes the ATP-dependent phosphorylation of L-homoserine to L-homoserine phosphate. The polypeptide is Homoserine kinase (Clostridium novyi (strain NT)).